The following is a 397-amino-acid chain: RNA pseudouridine synthase 5 (397 aa).

Positions 64 to 114 constitute an S4 RNA-binding domain; that stretch reads APLPGWIKRIRDGQITVDGEVATDPDMILREGSKLVYHRLPWQEPFAPHLL.

The protein belongs to the pseudouridine synthase RluA family.

It carries out the reaction a uridine in RNA = a pseudouridine in RNA. The chain is RNA pseudouridine synthase 5 from Oryza sativa subsp. japonica (Rice).